The chain runs to 118 residues: Small ribosomal subunit protein uS13 (118 aa).

Positions 93–118 (RGLPVRGQRTKTNARTRKGPRKPIRK) are disordered.

The protein belongs to the universal ribosomal protein uS13 family. Part of the 30S ribosomal subunit. Forms a loose heterodimer with protein S19. Forms two bridges to the 50S subunit in the 70S ribosome.

Functionally, located at the top of the head of the 30S subunit, it contacts several helices of the 16S rRNA. In the 70S ribosome it contacts the 23S rRNA (bridge B1a) and protein L5 of the 50S subunit (bridge B1b), connecting the 2 subunits; these bridges are implicated in subunit movement. Contacts the tRNAs in the A and P-sites. The chain is Small ribosomal subunit protein uS13 from Pseudomonas fluorescens (strain Pf0-1).